The chain runs to 284 residues: Tropomyosin beta chain (284 aa).

An N-acetylmethionine modification is found at M1. The segment at M1–A78 is disordered. Residues M1 to L284 adopt a coiled-coil conformation. Basic and acidic residues-rich tracts occupy residues K12–E40 and K51–A78. Residue T53 is modified to Phosphothreonine. S61 is subject to Phosphoserine; by PIK3CG. The residue at position 79 (T79) is a Phosphothreonine. S87 is subject to Phosphoserine. T108 is subject to Phosphothreonine. The tract at residues E117–K136 is disordered. Phosphoserine occurs at positions 158, 206, and 215. The residue at position 252 (T252) is a Phosphothreonine. Position 261 is a phosphotyrosine (Y261). S271 is modified (phosphoserine). Phosphothreonine is present on T282. S283 carries the post-translational modification Phosphoserine.

This sequence belongs to the tropomyosin family. In terms of assembly, homodimer. Heterodimer of an alpha (TPM1, TPM3 or TPM4) and a beta (TPM2) chain. In terms of processing, phosphorylated on Ser-61 by PIK3CG. Phosphorylation on Ser-61 is required for ADRB2 internalization.

The protein resides in the cytoplasm. Its subcellular location is the cytoskeleton. Its function is as follows. Binds to actin filaments in muscle and non-muscle cells. Plays a central role, in association with the troponin complex, in the calcium dependent regulation of vertebrate striated muscle contraction. Smooth muscle contraction is regulated by interaction with caldesmon. In non-muscle cells is implicated in stabilizing cytoskeleton actin filaments. The non-muscle isoform may have a role in agonist-mediated receptor internalization. This chain is Tropomyosin beta chain (Tpm2), found in Mus musculus (Mouse).